A 284-amino-acid polypeptide reads, in one-letter code: Pseudouridine-5'-phosphate glycosidase (284 aa).

The active-site Proton donor is Glu-17. Residues Lys-77 and Val-97 each coordinate substrate. Asp-126 serves as a coordination point for Mn(2+). Substrate is bound at residue 128–130 (SQD). Lys-147 (nucleophile) is an active-site residue.

Belongs to the pseudouridine-5'-phosphate glycosidase family. In terms of assembly, homotrimer. The cofactor is Mn(2+).

The enzyme catalyses D-ribose 5-phosphate + uracil = psi-UMP + H2O. Functionally, catalyzes the reversible cleavage of pseudouridine 5'-phosphate (PsiMP) to ribose 5-phosphate and uracil. Functions biologically in the cleavage direction, as part of a pseudouridine degradation pathway. This chain is Pseudouridine-5'-phosphate glycosidase, found in Thermotoga neapolitana (strain ATCC 49049 / DSM 4359 / NBRC 107923 / NS-E).